We begin with the raw amino-acid sequence, 982 residues long: MFQIRNYATKYAQSRALRKYPVGGVFHGYEVKRLLPVPELKLTAVDLLHNQTGSQHLHIDRDDNNNVFSIGFKTNPPDSTGVPHILEHTTLCGSHKYPVRDPFFKMLNRSLANFMNAMTGHDYTFYPFATTNETDFANLRDVYLDATLNPLLNQQDFLQEGWRLEHTKVDDPNSDIGFKGVVYNEMKGQVSNANYYFWIKFQESYYPSLNNSGGDPTKMTDLQYEDLISFHRNNYHPSNAKTFTYGNFDLNNTLQRLNKEYQGYGRRGSKKRELLPIQMKEDVSVETEGQVDPMLPPDKQIKTSVTWICGKPEDTYQTFLLKILGNLLLDGHSSPFYQKLIESGLAYDFSVNTGVESQTAANFITIGVQGCDEVDSIYEVINKVWEEVLQNPFEESRIQAIIQQLELSKKDQRADFGLQLLYSVLPGWVNKTDPFDSLLFDETLERFQEDWATKGDNLFKDLIKEFVISKPVFKFTMKGSETFSQKLDAEEQERLERKLKLLDEEDKKVIFERGKQLQELQDLKEDLSCLPSLQISAIPRVSKTYPLLEKDNVLNRITDTNGITYVRGKRLLNHHIPRELYPFLPLYADSLTNLGTSTEEFSTIEEQIKLHTGGVSTRVSVNPDAQTGKPMLLFQVDGWALNSKTDHIFKFWKKLLCETDFHKHKEKLKVLIRSLASSNTASVAETGHAFARNFGAAHLSVTKAINESLNGIEQLQLINKLSQCLDDEALFEKEVVSKLVELQSYINGSSDMKFMITSDSQVQIDAVHQQITGFLSSLPKDSKPCDFYSENYSMLENPGKPTLLQFPFQVHYTAKCYPGVSYTHPDGAKLQILSNMLTHKYLHREIREKGGAYGGGATYSALDGTFSFYSYRDPHALNSLSTFDSVPEFILNKSSWGEPDLNEAKLSVFQQVDSPMSAKNEGTILFHYDVTDEMKQRRREQLLDVNLNDIHQVAEEYLKQDKSIASIVGPEIPNFDALVQTV.

A mitochondrion-targeting transit peptide spans 1–7 (MFQIRNY). Position 84 (His84) interacts with Zn(2+). Residue Glu87 is the Proton acceptor of the active site. His88 is a Zn(2+) binding site. Glu160 is an active-site residue. Residue Glu185 coordinates Zn(2+).

This sequence belongs to the peptidase M16 family. PreP subfamily. Monomer and homodimer; homodimerization is induced by binding of the substrate. Requires Zn(2+) as cofactor.

It localises to the mitochondrion intermembrane space. The protein localises to the mitochondrion matrix. In terms of biological role, degrades mitochondrial transit peptides after their cleavage in the intermembrane space or in the matrix, and presequence peptides; clearance of these peptides is required to keep the presequence processing machinery running. Preferentially cleaves the N-terminal side of paired basic amino acid residues. Also degrades other unstructured peptides. May function as an ATP-dependent peptidase as opposed to a metalloendopeptidase. This is Presequence protease, mitochondrial (CYM1) from Kluyveromyces lactis (strain ATCC 8585 / CBS 2359 / DSM 70799 / NBRC 1267 / NRRL Y-1140 / WM37) (Yeast).